Consider the following 607-residue polypeptide: Elongation factor 4 (607 aa).

The tr-type G domain maps to 11–193; it reads KKIRNFSIIA…QIVELVPPPT (183 aa). GTP is bound by residues 23–28 and 140–143; these read DHGKST and NKID.

This sequence belongs to the TRAFAC class translation factor GTPase superfamily. Classic translation factor GTPase family. LepA subfamily.

It localises to the cell membrane. The enzyme catalyses GTP + H2O = GDP + phosphate + H(+). Functionally, required for accurate and efficient protein synthesis under certain stress conditions. May act as a fidelity factor of the translation reaction, by catalyzing a one-codon backward translocation of tRNAs on improperly translocated ribosomes. Back-translocation proceeds from a post-translocation (POST) complex to a pre-translocation (PRE) complex, thus giving elongation factor G a second chance to translocate the tRNAs correctly. Binds to ribosomes in a GTP-dependent manner. This is Elongation factor 4 from Exiguobacterium sp. (strain ATCC BAA-1283 / AT1b).